The primary structure comprises 394 residues: RILP-like protein 1 (394 aa).

The region spanning Glu-2–Lys-89 is the RH1 domain. The stretch at Glu-68–Gln-327 forms a coiled coil. Positions Arg-282–Leu-347 constitute an RH2 domain.

Belongs to the RILPL family.

The protein resides in the cytoplasm. The protein localises to the cytosol. It localises to the cytoskeleton. It is found in the microtubule organizing center. Its subcellular location is the centrosome. The protein resides in the cell projection. The protein localises to the cilium. In terms of biological role, plays a role in the regulation of cell shape and polarity. Plays a role in cellular protein transport, including protein transport away from primary cilia. Neuroprotective protein. The polypeptide is RILP-like protein 1 (rilpl1) (Xenopus laevis (African clawed frog)).